Reading from the N-terminus, the 840-residue chain is Phosphatidylglycerol lysyltransferase (840 aa).

Topologically, residues methionine 1 to lysine 8 are cytoplasmic. A helical membrane pass occupies residues isoleucine 9–leucine 29. The Extracellular segment spans residues tyrosine 30–serine 52. Residues leucine 53–isoleucine 73 form a helical membrane-spanning segment. Residues leucine 74 to arginine 89 are Cytoplasmic-facing. A helical transmembrane segment spans residues valine 90–glycine 110. Residues valine 111–histidine 128 lie on the Extracellular side of the membrane. The chain crosses the membrane as a helical span at residues phenylalanine 129 to valine 149. Over phenylalanine 150 to lysine 161 the chain is Cytoplasmic. A helical transmembrane segment spans residues isoleucine 162–tyrosine 182. At serine 183 to threonine 200 the chain is on the extracellular side. A helical transmembrane segment spans residues leucine 201–valine 221. Over aspartate 222–serine 229 the chain is Cytoplasmic. A helical membrane pass occupies residues phenylalanine 230–phenylalanine 250. At glycine 251–valine 271 the chain is on the extracellular side. The chain crosses the membrane as a helical span at residues leucine 272–isoleucine 292. The Cytoplasmic segment spans residues leucine 293–serine 337. Residues leucine 338–tyrosine 358 form a helical membrane-spanning segment. Residues aspartate 359–tyrosine 369 are Extracellular-facing. The chain crosses the membrane as a helical span at residues tyrosine 370–isoleucine 390. Topologically, residues tyrosine 391–serine 394 are cytoplasmic. 2 helical membrane passes run arginine 395–threonine 415 and tyrosine 416–phenylalanine 436. Residues arginine 437–asparagine 450 lie on the Cytoplasmic side of the membrane. The helical transmembrane segment at isoleucine 451–glycine 471 threads the bilayer. Residues threonine 472 to arginine 489 are Extracellular-facing. A helical membrane pass occupies residues tyrosine 490–phenylalanine 510. Over aspartate 511–lysine 840 the chain is Cytoplasmic.

This sequence belongs to the LPG synthase family.

It is found in the cell membrane. The enzyme catalyses L-lysyl-tRNA(Lys) + a 1,2-diacyl-sn-glycero-3-phospho-(1'-sn-glycerol) = a 1,2-diacyl-sn-glycero-3-phospho-1'-(3'-O-L-lysyl)-sn-glycerol + tRNA(Lys). Catalyzes the transfer of a lysyl group from L-lysyl-tRNA(Lys) to membrane-bound phosphatidylglycerol (PG), which produces lysylphosphatidylglycerol (LPG), a major component of the bacterial membrane with a positive net charge. LPG synthesis contributes to bacterial virulence as it is involved in the resistance mechanism against cationic antimicrobial peptides (CAMP) produces by the host's immune system (defensins, cathelicidins) and by the competing microorganisms (bacteriocins). In fact, the modification of anionic phosphatidylglycerol with positively charged L-lysine results in repulsion of the peptides. In Staphylococcus aureus (strain Mu50 / ATCC 700699), this protein is Phosphatidylglycerol lysyltransferase (mprF).